The primary structure comprises 509 residues: Protein disulfide-isomerase (509 aa).

A signal peptide spans 1–18; it reads MLRRAVLCLALAVTAGWA. The 117-residue stretch at 19–135 folds into the Thioredoxin 1 domain; that stretch reads WAAEEEDNVL…IVNWLKKRTG (117 aa). Catalysis depends on nucleophile residues Cys54 and Cys57. Cysteines 54 and 57 form a disulfide. N6-succinyllysine is present on residues Lys223 and Lys272. 2 positions are modified to phosphoserine: Ser332 and Ser358. The Thioredoxin 2 domain occupies 347–476; it reads FLEGKIKPHL…FKKFLESGGQ (130 aa). Active-site nucleophile residues include Cys398 and Cys401. Residues Cys398 and Cys401 are joined by a disulfide bond. Ser428 carries the phosphoserine modification. The tract at residues 471–509 is disordered; that stretch reads LESGGQDGAGDEDGLEDLEEAEEPDLEEDDDQKAVRDEL. The span at 479–501 shows a compositional bias: acidic residues; sequence AGDEDGLEDLEEAEEPDLEEDDD. The Prevents secretion from ER signature appears at 506–509; the sequence is RDEL.

Belongs to the protein disulfide isomerase family. As to quaternary structure, heterodimer; heterodimerizes with the protein microsomal triglyceride transfer MTTP. Homodimer. Monomers and homotetramers may also occur. Interacts with P4HA2, forming a heterotetramer consisting of 2 alpha subunits (P4HA2) and 2 beta (P4HB), where P4HB plays the role of a structural subunit; this tetramer catalyzes the formation of 4-hydroxyproline in collagen. Also constitutes the structural subunit of the microsomal triacylglycerol transfer protein MTTP in mammalian cells. Stabilizes both enzymes and retain them in the ER without contributing to the catalytic activity. Binds UBQLN1. Interacts with ERO1B. Interacts with ILDR2. Interacts with ERN1/IRE1A (via N-terminus); the interaction is enhanced by phosphorylation of P4HB by FAM20C in response to endoplasmic reticulum stress and results in attenuation of ERN1 activity. Phosphorylation of Ser-358 by FAM20C is induced by endoplasmic reticulum stress and results in a functional switch from oxidoreductase to molecular chaperone. It also promotes interaction with ERN1.

It localises to the endoplasmic reticulum. Its subcellular location is the endoplasmic reticulum lumen. The protein resides in the melanosome. It is found in the cell membrane. It carries out the reaction Catalyzes the rearrangement of -S-S- bonds in proteins.. Its function is as follows. This multifunctional protein catalyzes the formation, breakage and rearrangement of disulfide bonds. At the cell surface, seems to act as a reductase that cleaves disulfide bonds of proteins attached to the cell. May therefore cause structural modifications of exofacial proteins. Inside the cell, seems to form/rearrange disulfide bonds of nascent proteins. At high concentrations and following phosphorylation by FAM20C, functions as a chaperone that inhibits aggregation of misfolded proteins. At low concentrations, facilitates aggregation (anti-chaperone activity). May be involved with other chaperones in the structural modification of the TG precursor in hormone biogenesis. Also acts as a structural subunit of various enzymes such as prolyl 4-hydroxylase and microsomal triacylglycerol transfer protein MTTP. Receptor for LGALS9; the interaction retains P4HB at the cell surface of Th2 T helper cells, increasing disulfide reductase activity at the plasma membrane, altering the plasma membrane redox state and enhancing cell migration. The polypeptide is Protein disulfide-isomerase (P4HB) (Oryctolagus cuniculus (Rabbit)).